Consider the following 232-residue polypeptide: Probable metallo-hydrolase M6_Spy0554 (232 aa).

Residues His-75, His-77, Asp-79, His-80, His-155, Asp-174, and His-215 each coordinate Zn(2+).

Requires Zn(2+) as cofactor.

The chain is Probable metallo-hydrolase M6_Spy0554 from Streptococcus pyogenes serotype M6 (strain ATCC BAA-946 / MGAS10394).